A 225-amino-acid chain; its full sequence is Immune-associated nucleotide-binding protein 1 (225 aa).

Residues C6–K214 enclose the AIG1-type G domain. Residues G15–S22 form a G1 region. G15–S23 serves as a coordination point for GTP. A G2 region spans residues D42–R46. Positions D64–G67 are G3. Residues T134–D137 form a G4 region. The interval N173–K175 is G5. N174 lines the GTP pocket.

The protein belongs to the TRAFAC class TrmE-Era-EngA-EngB-Septin-like GTPase superfamily. AIG1/Toc34/Toc159-like paraseptin GTPase family. IAN subfamily. In terms of tissue distribution, mostly expressed in pollen.

The polypeptide is Immune-associated nucleotide-binding protein 1 (Arabidopsis thaliana (Mouse-ear cress)).